We begin with the raw amino-acid sequence, 433 residues long: Phosphomethylpyrimidine synthase (433 aa).

Residues asparagine 69, methionine 98, tyrosine 127, histidine 163, 185-187, 226-229, and glutamate 265 contribute to the substrate site; these read SRG and DALR. Histidine 269 is a binding site for Zn(2+). Tyrosine 292 serves as a coordination point for substrate. Residue histidine 333 participates in Zn(2+) binding. [4Fe-4S] cluster contacts are provided by cysteine 409, cysteine 412, and cysteine 416.

Belongs to the ThiC family. [4Fe-4S] cluster serves as cofactor.

It catalyses the reaction 5-amino-1-(5-phospho-beta-D-ribosyl)imidazole + S-adenosyl-L-methionine = 4-amino-2-methyl-5-(phosphooxymethyl)pyrimidine + CO + 5'-deoxyadenosine + formate + L-methionine + 3 H(+). It functions in the pathway cofactor biosynthesis; thiamine diphosphate biosynthesis. Functionally, catalyzes the synthesis of the hydroxymethylpyrimidine phosphate (HMP-P) moiety of thiamine from aminoimidazole ribotide (AIR) in a radical S-adenosyl-L-methionine (SAM)-dependent reaction. The chain is Phosphomethylpyrimidine synthase from Finegoldia magna (strain ATCC 29328 / DSM 20472 / WAL 2508) (Peptostreptococcus magnus).